The following is a 318-amino-acid chain: Tumor necrosis factor ligand superfamily member 11 (318 aa).

Residues 1–47 (MRRANRDYGKYLRGSEEMGSCPGVPHEGPLHPAPSAPAPAPPPAASR) are Cytoplasmic-facing. Residues 13–41 (RGSEEMGSCPGVPHEGPLHPAPSAPAPAP) are disordered. Residues 31–41 (HPAPSAPAPAP) are compositionally biased toward pro residues. The helical; Signal-anchor for type II membrane protein transmembrane segment at 48-68 (FMFLALLGLGLGQVVCSIALF) threads the bilayer. Residues 69 to 318 (LYFRAQMDPN…FGAFKVQDID (250 aa)) lie on the Extracellular side of the membrane. A THD domain is found at 165 to 314 (PFAHLTINAA…DATYFGAFKV (150 aa)). N-linked (GlcNAc...) asparagine glycans are attached at residues Asn-199 and Asn-264.

The protein belongs to the tumor necrosis factor family. As to quaternary structure, homotrimer. Interacts with TNFRSF11A and TNFRSF11B. Interacts with FBN1 (via N-terminal domain) in a Ca(+2)-dependent manner. Interacts with TNFAIP6 (via both Link and CUB domains). In terms of processing, the soluble form derives from the membrane form by proteolytic processing. As to expression, highly expressed in thymus and bone tissues.

Its subcellular location is the cell membrane. The protein resides in the secreted. Cytokine that binds to TNFRSF11B/OPG and to TNFRSF11A/RANK. Osteoclast differentiation and activation factor. Augments the ability of dendritic cells to stimulate naive T-cell proliferation. May be an important regulator of interactions between T-cells and dendritic cells and may play a role in the regulation of the T-cell-dependent immune response. May also play an important role in enhanced bone-resorption in humoral hypercalcemia of malignancy. Induces osteoclastogenesis by activating multiple signaling pathways in osteoclast precursor cells, chief among which is induction of long lasting oscillations in the intracellular concentration of Ca (2+) resulting in the activation of NFATC1, which translocates to the nucleus and induces osteoclast-specific gene transcription to allow differentiation of osteoclasts. During osteoclast differentiation, in a TMEM64 and ATP2A2-dependent manner induces activation of CREB1 and mitochondrial ROS generation necessary for proper osteoclast generation. This chain is Tumor necrosis factor ligand superfamily member 11 (Tnfsf11), found in Rattus norvegicus (Rat).